We begin with the raw amino-acid sequence, 417 residues long: NADH-quinone oxidoreductase subunit D (417 aa).

It belongs to the complex I 49 kDa subunit family. NDH-1 is composed of 14 different subunits. Subunits NuoB, C, D, E, F, and G constitute the peripheral sector of the complex.

Its subcellular location is the cell inner membrane. The enzyme catalyses a quinone + NADH + 5 H(+)(in) = a quinol + NAD(+) + 4 H(+)(out). Its function is as follows. NDH-1 shuttles electrons from NADH, via FMN and iron-sulfur (Fe-S) centers, to quinones in the respiratory chain. The immediate electron acceptor for the enzyme in this species is believed to be ubiquinone. Couples the redox reaction to proton translocation (for every two electrons transferred, four hydrogen ions are translocated across the cytoplasmic membrane), and thus conserves the redox energy in a proton gradient. The protein is NADH-quinone oxidoreductase subunit D of Methylobacillus flagellatus (strain ATCC 51484 / DSM 6875 / VKM B-1610 / KT).